The sequence spans 663 residues: Polyunsaturated fatty acid lipoxygenase ALOX12 (663 aa).

The 113-residue stretch at 2 to 114 (GRYRVRVVTG…ILSLPEGTAR (113 aa)) folds into the PLAT domain. The 549-residue stretch at 115-663 (LAGDNALDVF…PSRIENSITI (549 aa)) folds into the Lipoxygenase domain. Position 246 is a phosphoserine (Ser-246). Residues His-360, His-365, His-540, Asn-544, and Ile-663 each coordinate Fe cation.

This sequence belongs to the lipoxygenase family. It depends on Fe cation as a cofactor. As to expression, found primarily in platelets and in microsomal and cytosolic fractions of the epidermis (at protein level).

It localises to the cytoplasm. Its subcellular location is the cytosol. It is found in the membrane. The enzyme catalyses (5Z,8Z,11Z,14Z)-eicosatetraenoate + O2 = (12S)-hydroperoxy-(5Z,8Z,10E,14Z)-eicosatetraenoate. It carries out the reaction (9Z,12Z)-octadecadienoate + O2 = (13S)-hydroperoxy-(9Z,11E)-octadecadienoate. The catalysed reaction is 2 leukotriene A4 + O2 + 2 H2O = 2 lipoxin A4. It catalyses the reaction 2 leukotriene A4 + O2 + 2 H2O = 2 lipoxin B4. The enzyme catalyses (5Z,8Z,11Z)-eicosatrienoate + O2 = (12S)-hydroperoxy-(5Z,8Z,10E)-eicosatrienoate. It carries out the reaction (8Z,11Z,14Z)-eicosatrienoate + O2 = (12S)-hydroperoxy-(8Z,10E,14Z)-eicosatrienoate. The catalysed reaction is (4Z,7Z,10Z,13Z,16Z,19Z)-docosahexaenoate + O2 = (14S)-hydroperoxy-(4Z,7Z,10Z,12E,16Z,19Z)-docosahexaenoate. It catalyses the reaction (7S)-hydroperoxy-(4Z,8E,10Z,13Z,16Z,19Z)-docosahexaenoate + O2 = (7S,14S)-dihydroperoxy-(4Z,8E,10Z,12E,16Z,19Z)-docosahexaenoate. The enzyme catalyses (7S)-hydroperoxy-(4Z,8E,10Z,13Z,16Z,19Z)-docosahexaenoate + O2 = (7S,17S)-dihydroperoxy-(4Z,8E,10Z,13Z,15E,19Z)-docosahexaenoate. It carries out the reaction (14R,15S)-epoxy-(5Z,8Z,11Z)-eicosatrienoate + O2 = (12S)-hydroperoxy-(14R,15S)-epoxy-(5Z,8Z,10E)-eicosatrienoate. The catalysed reaction is (14S,15R)-epoxy-(5Z,8Z,11Z)-eicosatrienoate + O2 = (12S)-hydroperoxy-(14S,15R)-epoxy-(5Z,8Z,10E)-eicosatrienoate. It catalyses the reaction (5Z,8Z,11Z,14Z)-eicosatetraenoate + O2 = (15S)-hydroperoxy-(5Z,8Z,11Z,13E)-eicosatetraenoate. The enzyme catalyses (14S)-hydroperoxy-(4Z,7Z,10Z,12E,16Z,19Z)-docosahexaenoate = (13S,14S)-epoxy-(4Z,7Z,9E,11E,16Z,19Z)-docosahexaenoate + H2O. It carries out the reaction N-(5Z,8Z,11Z,14Z)-eicosatetraenoyl-L-alanine + O2 = N-(15S)-hydroperoxy-(5Z,8Z,11Z,13E)-eicosatetraenoyl-alanine. The catalysed reaction is N-(5Z,8Z,11Z,14Z)-eicosatetraenoyl-L-alanine + O2 = N-(12S)-hydroperoxy-(5Z,8Z,10E,14Z)-eicosatetraenoyl-alanine. It catalyses the reaction N-(5Z,8Z,11Z,14Z)-eicosatetraenoyl-gamma-aminobutanoate + O2 = N-(15S)-hydroperoxy-(5Z,8Z,11Z,13E)-eicosatetraenoyl-gamma-aminobutanoate. The enzyme catalyses N-(5Z,8Z,11Z,14Z)-eicosatetraenoyl-gamma-aminobutanoate + O2 = N-(12S)-hydroperoxy-(5Z,8Z,10E,14Z)-eicosatetraenoyl-gamma-aminobutanoate. It carries out the reaction N-(5Z,8Z,11Z,14Z)-eicosatetraenoyl-glycine + O2 = N-(15S)-hydroperoxy-(5Z,8Z,11Z,13E)-eicosatetraenoyl-glycine. The catalysed reaction is N-(5Z,8Z,11Z,14Z)-eicosatetraenoyl-glycine + O2 = N-(12S)-hydroperoxy-(5Z,8Z,10E,14Z)-eicosatetraenoyl-glycine. It catalyses the reaction N-(5Z,8Z,11Z,14Z)-eicosatetraenoyl-taurine + O2 = N-(12S)-hydroperoxy-(5Z,8Z,10E,14Z)-eicosatetraenoyl-taurine. The enzyme catalyses N-(5Z,8Z,11Z,14Z)-eicosatetraenoyl-taurine + O2 = N-(15S)-hydroperoxy-(5Z,8Z,11Z,13E)-eicosatetraenoyl-taurine. It carries out the reaction (5Z,8Z,11Z,14Z,17Z)-eicosapentaenoate + O2 = (12S)-hydroperoxy-(5Z,8Z,10E,14Z,17Z)-eicosapentaenoate. It participates in lipid metabolism; hydroperoxy eicosatetraenoic acid biosynthesis. Activated by EGF. Arachidonic acid conversion is inhibited by (13S,14S)-epoxy-(4Z,7Z,9E,11E,16Z,19Z)-docosahexaenoate (13S,14S-epoxy-DHA). Arachidonate 12-lipoxygenase activity is decreased when PH decreases from 7.4 to 6. Its function is as follows. Catalyzes the regio and stereo-specific incorporation of molecular oxygen into free and esterified polyunsaturated fatty acids generating lipid hydroperoxides that can be further reduced to the corresponding hydroxy species. Mainly converts arachidonate ((5Z,8Z,11Z,14Z)-eicosatetraenoate) to the specific bioactive lipid (12S)-hydroperoxyeicosatetraenoate/(12S)-HPETE. Through the production of bioactive lipids like (12S)-HPETE it regulates different biological processes including platelet activation. It can also catalyze the epoxidation of double bonds of polyunsaturated fatty acids such as (14S)-hydroperoxy-docosahexaenoate/(14S)-HPDHA resulting in the formation of (13S,14S)-epoxy-DHA. Furthermore, it may participate in the sequential oxidations of DHA ((4Z,7Z,10Z,13Z,16Z,19Z)-docosahexaenoate) to generate specialized pro-resolving mediators (SPMs) like resolvin D5 ((7S,17S)-diHPDHA) and (7S,14S)-diHPDHA, that actively down-regulate the immune response and have anti-aggregation properties with platelets. An additional function involves a multistep process by which it transforms leukotriene A4/LTA4 into the bioactive lipids lipoxin A4/LXA4 and lipoxin B4/LXB4, both are vasoactive and LXA4 may regulate neutrophil function via occupancy of specific recognition sites. Can also peroxidize linoleate ((9Z,12Z)-octadecadienoate) to (13S)-hydroperoxyoctadecadienoate/ (13S-HPODE). Due to its role in regulating both the expression of the vascular endothelial growth factor (VEGF, an angiogenic factor involved in the survival and metastasis of solid tumors) and the expression of integrin beta-1 (known to affect tumor cell migration and proliferation), it can be regarded as protumorigenic. Important for cell survival, as it may play a role not only in proliferation but also in the prevention of apoptosis in vascular smooth muscle cells. This is Polyunsaturated fatty acid lipoxygenase ALOX12 (Alox12) from Mus musculus (Mouse).